Reading from the N-terminus, the 322-residue chain is Quinolinate synthase (322 aa).

Iminosuccinate is bound by residues H36 and S53. C98 contacts [4Fe-4S] cluster. Residues Y124–N126 and S141 each bind iminosuccinate. C184 lines the [4Fe-4S] cluster pocket. Residues H210 to E212 and T227 each bind iminosuccinate. C278 is a binding site for [4Fe-4S] cluster.

It belongs to the quinolinate synthase family. Type 2 subfamily. [4Fe-4S] cluster serves as cofactor.

The protein localises to the cytoplasm. It carries out the reaction iminosuccinate + dihydroxyacetone phosphate = quinolinate + phosphate + 2 H2O + H(+). Its pathway is cofactor biosynthesis; NAD(+) biosynthesis; quinolinate from iminoaspartate: step 1/1. Catalyzes the condensation of iminoaspartate with dihydroxyacetone phosphate to form quinolinate. In Chloroherpeton thalassium (strain ATCC 35110 / GB-78), this protein is Quinolinate synthase.